The following is a 1242-amino-acid chain: Structural polyprotein (1242 aa).

The tract at residues 1–36 (MFPYPTLNYSPMAPVNPMAYRDPNPPRRRWRPFRPP) is necessary for nucleocapsid assembly and virus assembly. The tract at residues 1–104 (MFPYPTLNYS…KQKPGKRQRM (104 aa)) is disordered. A host transcription inhibition region spans residues 37-70 (LAAQIEDLRRSIANLTFKQRAPNPPAGPPAKRKK). Residues 44-51 (LRRSIANL) carry the Supraphysiological nuclear export signal motif. A compositionally biased stretch (basic residues) spans 66 to 104 (AKRKKPAPKPKPAAPKKKRQPPPAKKQKRKQKPGKRQRM). The Nuclear localization signal motif lies at 67–70 (KRKK). The interval 83–113 (KRQPPPAKKQKRKQKPGKRQRMCMKLESDKT) is binding to the viral RNA. The segment at 98–112 (PGKRQRMCMKLESDK) is ribosome-binding. Phosphoserine is present on Ser110. Positions 112 to 261 (KTFPILLNGQ…KDTPEGSEPW (150 aa)) constitute a Peptidase S3 domain. Thr113 carries the post-translational modification Phosphothreonine. Catalysis depends on charge relay system residues His138, Asp160, and Ser212. A functions as an uncleaved signal peptide for the precursor of protein E3/E2 region spans residues 262 to 273 (SLTTVMCVLANI). Asn272 carries an N-linked (GlcNAc...) asparagine; by host glycan. The Extracellular segment spans residues 325 to 688 (DLETHFTQYK…YYYNRYPMTT (364 aa)). A helical membrane pass occupies residues 689 to 709 (IVGLCTCAAIIMVSCITSVWL). Residues 710–744 (LCRTRNLCITPYRLAPNAQVPILLAVLCCVKPTRA) are Cytoplasmic-facing. S-palmitoyl cysteine; by host attachment occurs at residues Cys717, Cys737, and Cys738. A transient transmembrane before p62-6K protein processing region spans residues 717-737 (CITPYRLAPNAQVPILLAVLC). Residues 745 to 759 (DDTLQVLNYLWNNNQ) lie on the Extracellular side of the membrane. 2 helical membrane passes run 760–780 (NFFW…MRML) and 781–801 (RCLL…GAAA). At 802–1218 (YEHTAVMPNK…WSWLKVLVGS (417 aa)) the chain is on the extracellular side. 8 cysteine pairs are disulfide-bonded: Cys850–Cys915, Cys863–Cys895, Cys864–Cys897, Cys869–Cys879, Cys1061–Cys1073, Cys1103–Cys1178, Cys1108–Cys1182, and Cys1130–Cys1172. The segment at 885-902 (VYPFMWGGAYCFCDTENT) is E1 fusion peptide loop. Residues 1219–1239 (TSAFIVLGLIATAVVALVLFT) form a helical membrane-spanning segment. The Cytoplasmic segment spans residues 1240–1242 (HKH).

As to quaternary structure, part of a tetrameric complex composed of host CRM1, host importin alpha/beta dimer and the viral capsid; this complex blocks the receptor-mediated transport through the nuclear pore. Interacts with host phosphatase PPP1CA; this interaction dephosphorylates the capsid protein, which increases its ability to bind to the viral genome. Interacts with host karyopherin KPNA4; this interaction allows the nuclear import of the viral capsid protein. Interacts with spike glycoprotein E2. Interacts with host IRAK1; the interaction leads to inhibition of IRAK1-dependent signaling. The precursor of protein E3/E2 and E1 form a heterodimer shortly after synthesis. In terms of assembly, the precursor of protein E3/E2 and E1 form a heterodimer shortly after synthesis. Processing of the precursor of protein E3/E2 into E2 and E3 results in a heterodimer of the spike glycoproteins E2 and E1. Spike at virion surface are constituted of three E2-E1 heterodimers. After target cell attachment and endocytosis, E1 change conformation to form homotrimers. Interacts with 6K protein. As to quaternary structure, processing of the precursor of protein E3/E2 into E2 and E3 results in a heterodimer of the spike glycoproteins E2 and E1. Spike at virion surface are constituted of three E2-E1 heterodimers. Interacts with 6K protein. Interacts with spike glycoprotein E1. Interacts with spike glycoprotein E2. Post-translationally, structural polyprotein: Specific enzymatic cleavages in vivo yield mature proteins. Capsid protein is auto-cleaved during polyprotein translation, unmasking a signal peptide at the N-terminus of the precursor of E3/E2. The remaining polyprotein is then targeted to the host endoplasmic reticulum, where host signal peptidase cleaves it into pE2, 6K and E1 proteins. pE2 is further processed to mature E3 and E2 by host furin in trans-Golgi vesicle. Phosphorylated on serine and threonine residues. In terms of processing, palmitoylated via thioester bonds. These palmitoylations may induce disruption of the C-terminus transmembrane. This would result in the reorientation of E2 C-terminus from lumenal to cytoplasmic side. Post-translationally, N-glycosylated. Palmitoylated via thioester bonds.

The protein localises to the virion. It is found in the host cytoplasm. Its subcellular location is the host cell membrane. The protein resides in the host nucleus. It localises to the virion membrane. The catalysed reaction is Autocatalytic release of the core protein from the N-terminus of the togavirus structural polyprotein by hydrolysis of a -Trp-|-Ser- bond.. Functionally, forms an icosahedral capsid with a T=4 symmetry composed of 240 copies of the capsid protein surrounded by a lipid membrane through which penetrate 80 spikes composed of trimers of E1-E2 heterodimers. The capsid protein binds to the viral RNA genome at a site adjacent to a ribosome binding site for viral genome translation following genome release. Possesses a protease activity that results in its autocatalytic cleavage from the nascent structural protein. Following its self-cleavage, the capsid protein transiently associates with ribosomes, and within several minutes the protein binds to viral RNA and rapidly assembles into icosahedric core particles. The resulting nucleocapsid eventually associates with the cytoplasmic domain of the spike glycoprotein E2 at the cell membrane, leading to budding and formation of mature virions. In case of infection, new virions attach to target cells and after clathrin-mediated endocytosis their membrane fuses with the host endosomal membrane. This leads to the release of the nucleocapsid into the cytoplasm, followed by an uncoating event necessary for the genomic RNA to become accessible. The uncoating might be triggered by the interaction of capsid proteins with ribosomes. Binding of ribosomes would release the genomic RNA since the same region is genomic RNA-binding and ribosome-binding. Specifically inhibits interleukin-1 receptor-associated kinase 1/IRAK1-dependent signaling during viral entry, representing a means by which the alphaviruses may evade innate immune detection and activation prior to viral gene expression. Inhibits host transcription. Forms a tetrameric complex with XPO1/CRM1 and the nuclear import receptor importin. This complex blocks the central channel of host nuclear pores thereby inhibiting the receptor-mediated nuclear transport and thus the host mRNA and rRNA transcription. The inhibition of transcription is linked to a cytopathic effect on the host cell. In terms of biological role, provides the signal sequence for the translocation of the precursor of protein E3/E2 to the host endoplasmic reticulum. Furin-cleaved E3 remains associated with spike glycoprotein E1 and mediates pH protection of the latter during the transport via the secretory pathway. After virion release from the host cell, the assembly protein E3 is gradually released in the extracellular space. Plays a role in viral attachment to target host cell, by binding to the cell receptor. Synthesized as a p62 precursor which is processed by furin at the cell membrane just before virion budding, giving rise to E2-E1 heterodimer. The p62-E1 heterodimer is stable, whereas E2-E1 is unstable and dissociate at low pH. p62 is processed at the last step, presumably to avoid E1 fusion activation before its final export to cell surface. E2 C-terminus contains a transitory transmembrane that would be disrupted by palmitoylation, resulting in reorientation of the C-terminal tail from lumenal to cytoplasmic side. This step is critical since E2 C-terminus is involved in budding by interacting with capsid proteins. This release of E2 C-terminus in cytoplasm occurs lately in protein export, and precludes premature assembly of particles at the endoplasmic reticulum membrane. Its function is as follows. Constitutive membrane protein involved in virus glycoprotein processing, cell permeabilization, and the budding of viral particles. Disrupts the calcium homeostasis of the cell, probably at the endoplasmic reticulum level. This leads to cytoplasmic calcium elevation. Because of its lipophilic properties, the 6K protein is postulated to influence the selection of lipids that interact with the transmembrane domains of the glycoproteins, which, in turn, affects the deformability of the bilayer required for the extreme curvature that occurs as budding proceeds. Present in low amount in virions, about 3% compared to viral glycoproteins. Functionally, class II viral fusion protein. Fusion activity is inactive as long as E1 is bound to E2 in mature virion. After virus attachment to target cell and endocytosis, acidification of the endosome would induce dissociation of E1/E2 heterodimer and concomitant trimerization of the E1 subunits. This E1 trimer is fusion active, and promotes release of viral nucleocapsid in cytoplasm after endosome and viral membrane fusion. Efficient fusion requires the presence of cholesterol and sphingolipid in the target membrane. Fusion is optimal at levels of about 1 molecule of cholesterol per 2 molecules of phospholipids, and is specific for sterols containing a 3-beta-hydroxyl group. The chain is Structural polyprotein from Aedes (Human).